A 129-amino-acid polypeptide reads, in one-letter code: UPF0325 protein PC1_0937 (129 aa).

This sequence belongs to the UPF0325 family.

This chain is UPF0325 protein PC1_0937, found in Pectobacterium carotovorum subsp. carotovorum (strain PC1).